The primary structure comprises 252 residues: Protein BTG3 (252 aa).

The interval 138 to 162 (VTSDYHSGSSSSDEDTSKEVEVKPS) is disordered.

Belongs to the BTG family. In terms of tissue distribution, highly expressed in the brain.

Functionally, overexpression impairs serum-induced cell cycle progression from the G0/G1 to S phase. In Rattus norvegicus (Rat), this protein is Protein BTG3.